Consider the following 164-residue polypeptide: Thiol peroxidase (164 aa).

Residues Val18 to Asn163 enclose the Thioredoxin domain. Cys60 acts as the Cysteine sulfenic acid (-SOH) intermediate in catalysis. The cysteines at positions 60 and 93 are disulfide-linked.

Belongs to the peroxiredoxin family. Tpx subfamily. In terms of assembly, homodimer.

It carries out the reaction a hydroperoxide + [thioredoxin]-dithiol = an alcohol + [thioredoxin]-disulfide + H2O. In terms of biological role, thiol-specific peroxidase that catalyzes the reduction of hydrogen peroxide and organic hydroperoxides to water and alcohols, respectively. Plays a role in cell protection against oxidative stress by detoxifying peroxides. This chain is Thiol peroxidase, found in Staphylococcus epidermidis (strain ATCC 35984 / DSM 28319 / BCRC 17069 / CCUG 31568 / BM 3577 / RP62A).